The following is a 251-amino-acid chain: 4-hydroxy-tetrahydrodipicolinate reductase (251 aa).

NAD(+)-binding positions include 8 to 13, 76 to 78, and 106 to 109; these read GAKGRM, GTT, and APNF. Catalysis depends on His-136, which acts as the Proton donor/acceptor. A (S)-2,3,4,5-tetrahydrodipicolinate-binding site is contributed by His-137. Lys-140 serves as the catalytic Proton donor. 146 to 147 lines the (S)-2,3,4,5-tetrahydrodipicolinate pocket; the sequence is GT.

The protein belongs to the DapB family.

Its subcellular location is the cytoplasm. The catalysed reaction is (S)-2,3,4,5-tetrahydrodipicolinate + NAD(+) + H2O = (2S,4S)-4-hydroxy-2,3,4,5-tetrahydrodipicolinate + NADH + H(+). The enzyme catalyses (S)-2,3,4,5-tetrahydrodipicolinate + NADP(+) + H2O = (2S,4S)-4-hydroxy-2,3,4,5-tetrahydrodipicolinate + NADPH + H(+). It participates in amino-acid biosynthesis; L-lysine biosynthesis via DAP pathway; (S)-tetrahydrodipicolinate from L-aspartate: step 4/4. In terms of biological role, catalyzes the conversion of 4-hydroxy-tetrahydrodipicolinate (HTPA) to tetrahydrodipicolinate. This is 4-hydroxy-tetrahydrodipicolinate reductase from Bifidobacterium longum subsp. infantis (strain ATCC 15697 / DSM 20088 / JCM 1222 / NCTC 11817 / S12).